The chain runs to 513 residues: Zinc finger protein 395 (513 aa).

The segment covering 17 to 29 (ARVLGPSASEGPS) has biased composition (low complexity). Residues 17–56 (ARVLGPSASEGPSAAPPSEPLLEGAAPQPFTTSDDTPCQE) are disordered. A compositionally biased stretch (polar residues) spans 45–55 (PFTTSDDTPCQ). The short motif at 165-174 (MDEMMAAMVL) is the Nuclear export signal element. The segment at 204 to 269 (KESGDISDSG…DPFLLDEPAP (66 aa)) is disordered. Residues 209-229 (ISDSGSSTTSGHWSGSSGVST) are compositionally biased toward low complexity. A Phosphoserine modification is found at Ser-248. The C2H2-type zinc finger occupies 280-305 (YKCLWPNCGKVLRSIVGIKRHVKALH). The interval 335 to 394 (AAAAAAAGTPVPGTPTSEPAPTPSMTGLPLSALPPPLHKAQSSGPEHPGPESSLPSGALS) is disordered. Positions 348 to 359 (TPTSEPAPTPSM) are enriched in polar residues. Phosphoserine is present on residues Ser-376 and Ser-449. Low complexity predominate over residues 376–391 (SSGPEHPGPESSLPSG).

In terms of assembly, interacts with repression-mediating E2 binding site P2 of human papillomavirus type 8 (HPV8). Widely expressed.

The protein localises to the cytoplasm. Its subcellular location is the nucleus. In terms of biological role, plays a role in papillomavirus genes transcription. This chain is Zinc finger protein 395 (ZNF395), found in Homo sapiens (Human).